We begin with the raw amino-acid sequence, 546 residues long: Choline/ethanolamine transporter FLVCR2 (546 aa).

A disordered region spans residues 1–84; that stretch reads MVNESLNQEE…TLAQPSGLTH (84 aa). The Cytoplasmic segment spans residues 1–93; the sequence is MVNESLNQEE…HPNELVKEDS (93 aa). Residues 22–49 show a composition bias toward polar residues; it reads QADTSYSTQPSVSIHPSVSGHPSVSIHP. 7 repeat units span residues 31–36, 37–42, 43–48, 49–54, 55–60, 61–66, and 67–72. The interval 31-84 is 9 X 6 AA tandem repeats of P-S-[VS]-S-[VIAG]-[HD]; the sequence is PSVSIHPSVSGHPSVSIHPSVSGHPSVSIDPSVSVHPSSSAHPSTLAQPSGLTH. Over residues 54–74 the composition is skewed to low complexity; it reads HPSVSIDPSVSVHPSSSAHPS. The 8; approximate repeat unit spans residues 73-78; the sequence is PSTLAQ. Residues 79-84 form a 9; approximate repeat; the sequence is PSGLTH. Residues 94–118 traverse the membrane as a helical segment; sequence VIKVSKRRWAVVLVFSCYSLCNAFQ. The choline site is built by Asn115, Ala116, and Trp119. Residues 119-136 are Extracellular-facing; the sequence is WIQYGSINNIFMNFYGVS. Residues 137-164 form a helical membrane-spanning segment; it reads AFAIDWLSMCYMLTYIPLLLPVAWMLEK. Over 165-166 the chain is Cytoplasmic; it reads FG. A helical membrane pass occupies residues 167–186; that stretch reads LRTIAITGSALNCLGAWVKL. The Extracellular segment spans residues 187 to 193; it reads GSLEPHL. Residues 194–222 traverse the membrane as a helical segment; that stretch reads FPVTMVGQVICSVAQVFILGMPSRIASVW. Residue Leu212 coordinates choline. Residues 223–227 lie on the Cytoplasmic side of the membrane; the sequence is FGANE. Residues 228–253 form a helical membrane-spanning segment; that stretch reads VSTACSMAVFGNQLGIAIGFLVPPVL. Residues 254–258 are Extracellular-facing; that stretch reads VPNIK. Residues 259 to 288 form a helical membrane-spanning segment; it reads DQEKLAYHISIMFYIIGGVATLLFILVIIV. Topologically, residues 289–324 are cytoplasmic; sequence FKEKPKYPPSRAQSLSYALATTDASYLSSIVRLFKN. A helical membrane pass occupies residues 325–355; sequence LNFVLLVITYGLNAGAFYALSTLLNRMVIMH. Tyr342 lines the choline pocket. Residues 356-359 lie on the Extracellular side of the membrane; the sequence is FPGQ. A helical membrane pass occupies residues 360–388; it reads EVNAGRIGLTIVIAGMFGAMISGIWLDKS. Topologically, residues 389 to 390 are cytoplasmic; the sequence is KT. A helical membrane pass occupies residues 391-413; it reads YKETTLVVYIMTLVGMVVYTFTL. Residues 414 to 416 are Extracellular-facing; that stretch reads NLN. Residues 417 to 446 form a helical membrane-spanning segment; it reads HLWIVFITADSLGFFMTGYLPLGFEFAVEL. Over 447–454 the chain is Cytoplasmic; the sequence is TYPESEGV. The helical transmembrane segment at 455–480 threads the bilayer; the sequence is SSGLLNVSAQVFGIIFTISQGQIIDN. Residue Gln464 participates in choline binding. Residues 481–482 lie on the Extracellular side of the membrane; the sequence is YG. The helical transmembrane segment at 483–505 threads the bilayer; sequence SVPGNIFLCVFLALGSALTAFIK. The Cytoplasmic segment spans residues 506–546; sequence SDLRRQRANKDAPETKVQEEEEEEEESNTSKVPTVLSEAHL. The segment covering 511–523 has biased composition (basic and acidic residues); the sequence is QRANKDAPETKVQ. A disordered region spans residues 511–546; sequence QRANKDAPETKVQEEEEEEEESNTSKVPTVLSEAHL. Ser535 bears the Phosphoserine mark.

It belongs to the major facilitator superfamily. Feline leukemia virus subgroup C receptor (TC 2.A.1.28.1) family. In terms of assembly, interacts with components of electron transfer chain complexes III, IV and V including CYC1, NDUFA4, COX4I1, ATP5PD and ATP5F1C; these interactions occur in the absence of heme and are disrupted upon heme binding. Interacts with ATP2A2; this interaction occurs in the absence of heme and promotes ATP2A2 proteasomal degradation; the complex is dissociated upon heme binding. Interacts with HMOX1; this interaction is potentiated in the presence of heme.

Its subcellular location is the cell membrane. It localises to the mitochondrion membrane. The protein localises to the endoplasmic reticulum membrane. The enzyme catalyses choline(out) = choline(in). It catalyses the reaction ethanolamine(in) = ethanolamine(out). It carries out the reaction heme b(in) = heme b(out). Functionally, choline uniporter that specifically mediates choline uptake at the blood-brain-barrier. Responsible for the majority of choline uptake across the blood-brain-barrier from the circulation into the brain. Choline, a nutrient critical for brain development, is a precursor of phosphatidylcholine, as well as betaine. Also mediates transport of ethanolamine. Choline and ethanolamine transport is not coupled with proton transport and is exclusively driven by the choline gradient across the plasma membrane. However, the presence of an inwardly directed proton gradient enhances choline uptake. Also acts as a heme b transporter. Required to regulate mitochondrial respiration processes, ATP synthesis and thermogenesis. At low heme levels, interacts with components of electron transfer chain (ETC) complexes and ATP2A2, leading to ubiquitin-mediated degradation of ATP2A2 and inhibition of thermogenesis. Upon heme binding, dissociates from ETC complexes to allow switching from mitochondrial ATP synthesis to thermogenesis. This Rattus norvegicus (Rat) protein is Choline/ethanolamine transporter FLVCR2 (Flvcr2).